The sequence spans 87 residues: MARVTVEDCLEHVENRFELVMLSTKRARQLATGGKEPLVQWENDKPTVVALREIAEGLMSYEFIAEQEIVHEDPVFAAFEDESNEAV.

It belongs to the RNA polymerase subunit omega family. As to quaternary structure, the RNAP catalytic core consists of 2 alpha, 1 beta, 1 beta' and 1 omega subunit. When a sigma factor is associated with the core the holoenzyme is formed, which can initiate transcription.

It catalyses the reaction RNA(n) + a ribonucleoside 5'-triphosphate = RNA(n+1) + diphosphate. Functionally, promotes RNA polymerase assembly. Latches the N- and C-terminal regions of the beta' subunit thereby facilitating its interaction with the beta and alpha subunits. This is DNA-directed RNA polymerase subunit omega from Pseudomonas fluorescens (strain Pf0-1).